We begin with the raw amino-acid sequence, 234 residues long: Glycerol uptake facilitator protein (234 aa).

6 consecutive transmembrane segments (helical) span residues 9-29 (FLGT…VVLP), 37-57 (GWIV…FVSG), 61-81 (PAYL…LPWA), 83-103 (VLPY…LVWL), 135-155 (LISE…LGLY), and 159-179 (AGIG…SLGG). Positions 65–67 (NPA) match the NPA 1 motif. An NPA 2 motif is present at residues 186 to 188 (NPA). A helical transmembrane segment spans residues 214 to 234 (WIPVVGPVIGAALAVLVFSLF).

Belongs to the MIP/aquaporin (TC 1.A.8) family.

The protein resides in the cell membrane. The enzyme catalyses glycerol(in) = glycerol(out). Functionally, mediates glycerol diffusion across the cytoplasmic membrane via a pore-type mechanism. This chain is Glycerol uptake facilitator protein (glpF), found in Streptococcus pneumoniae serotype 4 (strain ATCC BAA-334 / TIGR4).